Reading from the N-terminus, the 366-residue chain is Quinolinate synthase (366 aa).

Positions 44 and 61 each coordinate iminosuccinate. Cys-108 provides a ligand contact to [4Fe-4S] cluster. Iminosuccinate contacts are provided by residues 139–141 and Ser-160; that span reads YIN. [4Fe-4S] cluster is bound at residue Cys-228. Iminosuccinate contacts are provided by residues 254-256 and Thr-271; that span reads HPE. Cys-318 lines the [4Fe-4S] cluster pocket.

Belongs to the quinolinate synthase family. Type 3 subfamily. [4Fe-4S] cluster is required as a cofactor.

Its subcellular location is the cytoplasm. The catalysed reaction is iminosuccinate + dihydroxyacetone phosphate = quinolinate + phosphate + 2 H2O + H(+). The protein operates within cofactor biosynthesis; NAD(+) biosynthesis; quinolinate from iminoaspartate: step 1/1. Its function is as follows. Catalyzes the condensation of iminoaspartate with dihydroxyacetone phosphate to form quinolinate. The polypeptide is Quinolinate synthase (Listeria innocua serovar 6a (strain ATCC BAA-680 / CLIP 11262)).